Here is a 199-residue protein sequence, read N- to C-terminus: Small ribosomal subunit protein uS5 (199 aa).

Positions 1–29 (MATAGRRGGAASERRERRESRRQEASPEK) are disordered. Residues 12–27 (SERRERRESRRQEASP) show a composition bias toward basic and acidic residues. Residues 32 to 95 (FLERVVTINR…EEAKKHFFTV (64 aa)) form the S5 DRBM domain.

It belongs to the universal ribosomal protein uS5 family. Part of the 30S ribosomal subunit. Contacts proteins S4 and S8.

Its function is as follows. With S4 and S12 plays an important role in translational accuracy. In terms of biological role, located at the back of the 30S subunit body where it stabilizes the conformation of the head with respect to the body. This chain is Small ribosomal subunit protein uS5, found in Acidothermus cellulolyticus (strain ATCC 43068 / DSM 8971 / 11B).